A 422-amino-acid chain; its full sequence is Synaptotagmin-2 (422 aa).

Residues Met-1–Gln-43 are disordered. Residues Met-1 to Lys-60 are Vesicular-facing. Residues Ala-14–Ala-30 are compositionally biased toward low complexity. Residues Asp-31 to Gly-40 are compositionally biased toward polar residues. Asn-32 carries N-linked (GlcNAc...) asparagine glycosylation. Residues Ile-61 to Cys-87 form a helical membrane-spanning segment. Residues Lys-88–Lys-422 are Cytoplasmic-facing. The disordered stretch occupies residues Gly-102–Glu-141. Residues Asp-119–Glu-139 show a composition bias toward acidic residues. A phosphothreonine mark is found at Thr-125 and Thr-128. Residues Glu-136–Asn-382 form a phospholipid binding region. C2 domains follow at residues Asn-142–Arg-261 and Lys-273–His-406. Ca(2+) is bound by residues Leu-172, Asp-173, and Asp-179. Residue Thr-202 is modified to Phosphothreonine. Tyr-230 is subject to Phosphotyrosine. Ca(2+) is bound by residues Asp-231, Phe-232, Asp-233, Ser-236, Lys-237, Asp-239, Asp-304, Asp-310, Asp-364, and Asp-366. Position 386 is a phosphothreonine (Thr-386).

The protein belongs to the synaptotagmin family. As to quaternary structure, homotetramer. Heterodimer; heterodimerizes with SYT1 in presence of calcium. Interacts with SCAMP5. Interacts with STON2. Interacts with PRRT2. In terms of assembly, (Microbial infection) Interacts with C.botulinum neurotoxin type B (BoNT/B, botB). (Microbial infection) Interacts with C.botulinum neurotoxin type G (BoNT/G, botG). The cofactor is Ca(2+). Phosphorylation at Thr-202 by WNK1, changes the calcium requirement for SYT2-binding to phospholipid membranes.

The protein resides in the cytoplasmic vesicle. The protein localises to the secretory vesicle. Its subcellular location is the synaptic vesicle membrane. It is found in the chromaffin granule membrane. It localises to the cytoplasm. In terms of biological role, exhibits calcium-dependent phospholipid and inositol polyphosphate binding properties. May have a regulatory role in the membrane interactions during trafficking of synaptic vesicles at the active zone of the synapse. Plays a role in dendrite formation by melanocytes. Its function is as follows. (Microbial infection) Receptor for C.botulinum neurotoxin type B (BoNT/B, botB); interaction is improved in the presence of gangliosides. The toxin binds via the vesicular domain (residues 47-60). (Microbial infection) Receptor for C.botulinum neurotoxin type G (BoNT/G, botG); gangliosides are not required for (or only very slightly improve) binding to a membrane-anchored receptor fragment. The toxin binds via the vesicular domain (residues 47-55). The chain is Synaptotagmin-2 from Mus musculus (Mouse).